The sequence spans 37 residues: Esculentin-2P (37 aa).

C31 and C37 form a disulfide bridge.

As to expression, expressed by the skin glands.

The protein resides in the secreted. Functionally, antibacterial activity against Gram-negative bacterium E.coli. This chain is Esculentin-2P, found in Lithobates pipiens (Northern leopard frog).